Reading from the N-terminus, the 225-residue chain is PKHD-type hydroxylase KPK_3192 (225 aa).

The Fe2OG dioxygenase domain maps to 78 to 177 (TISAPLFNRY…RQASFLWIQS (100 aa)). Fe cation is bound by residues His96, Asp98, and His158. Arg168 serves as a coordination point for 2-oxoglutarate.

Requires Fe(2+) as cofactor. It depends on L-ascorbate as a cofactor.

The sequence is that of PKHD-type hydroxylase KPK_3192 from Klebsiella pneumoniae (strain 342).